The sequence spans 527 residues: DNA polymerase epsilon subunit 2 (527 aa).

It belongs to the DNA polymerase epsilon subunit B family. Component of the DNA polymerase epsilon complex consisting of four subunits: the catalytic subunit POLE and the accessory subunits POLE2, POLE3 and POLE4.

It localises to the nucleus. Accessory component of the DNA polymerase epsilon complex. Participates in DNA repair and in chromosomal DNA replication. The polypeptide is DNA polymerase epsilon subunit 2 (Homo sapiens (Human)).